A 412-amino-acid polypeptide reads, in one-letter code: Alanyl-tRNA editing protein Aarsd1 (412 aa).

Residues histidine 109 and histidine 113 each contribute to the Zn(2+) site. Phosphoserine is present on serine 174. Zn(2+) contacts are provided by cysteine 209 and histidine 213.

It belongs to the class-II aminoacyl-tRNA synthetase family. Alax-L subfamily. It depends on Zn(2+) as a cofactor.

It localises to the cytoplasm. Functionally, functions in trans to edit the amino acid moiety from incorrectly charged Ser-tRNA(Ala). In Mus musculus (Mouse), this protein is Alanyl-tRNA editing protein Aarsd1 (Aarsd1).